The following is a 920-amino-acid chain: Puromycin-sensitive aminopeptidase (920 aa).

Substrate is bound by residues glutamate 181 and 317 to 321 (GAMEN). Position 353 (histidine 353) interacts with Zn(2+). Glutamate 354 (proton acceptor) is an active-site residue. Residues histidine 357 and glutamate 376 each coordinate Zn(2+). Residue tyrosine 465 is modified to 3'-nitrotyrosine. The Nuclear localization signal signature appears at 727-731 (RRRFK).

Belongs to the peptidase M1 family. As to quaternary structure, monomer. Zn(2+) serves as cofactor. Widely expressed. Highest expression in brain, particularly the striatum and hippocampus. Expressed in Sertoli cells.

It is found in the cytoplasm. Its subcellular location is the cytosol. The protein localises to the nucleus. The enzyme catalyses Release of an N-terminal amino acid, preferentially alanine, from a wide range of peptides, amides and arylamides.. Its activity is regulated as follows. Strongly inhibited by bestatin, leuhistin, actinonin, amastatin, 1,10-phenanthroline, DFP, PCMBS, Zn(2+), Cd(2+), Co(2+), Cu(2+), Hg(2+), EDTA and puromycin. Not inhibited by PMSF, and only slightly inhibited by leupeptin and aprotinin. Activity is increased by Mg(2+) and Ca(2+). In terms of biological role, aminopeptidase with broad substrate specificity for several peptides. Involved in proteolytic events essential for cell growth and viability. May act as regulator of neuropeptide activity. Plays a role in the antigen-processing pathway for MHC class I molecules. Involved in the N-terminal trimming of cytotoxic T-cell epitope precursors. Digests the poly-Q peptides found in many cellular proteins. This chain is Puromycin-sensitive aminopeptidase (Npepps), found in Mus musculus (Mouse).